The following is a 224-amino-acid chain: 2-C-methyl-D-erythritol 4-phosphate cytidylyltransferase (224 aa).

Belongs to the IspD/TarI cytidylyltransferase family. IspD subfamily.

It catalyses the reaction 2-C-methyl-D-erythritol 4-phosphate + CTP + H(+) = 4-CDP-2-C-methyl-D-erythritol + diphosphate. It participates in isoprenoid biosynthesis; isopentenyl diphosphate biosynthesis via DXP pathway; isopentenyl diphosphate from 1-deoxy-D-xylulose 5-phosphate: step 2/6. In terms of biological role, catalyzes the formation of 4-diphosphocytidyl-2-C-methyl-D-erythritol from CTP and 2-C-methyl-D-erythritol 4-phosphate (MEP). The protein is 2-C-methyl-D-erythritol 4-phosphate cytidylyltransferase of Bordetella petrii (strain ATCC BAA-461 / DSM 12804 / CCUG 43448).